We begin with the raw amino-acid sequence, 164 residues long: Ribosome-binding factor A (164 aa).

The tract at residues 123–164 (ARDLGVPPSGEDDGDDEADDEDDDGGEEGPGAAAPPPADEGR) is disordered. A compositionally biased stretch (acidic residues) spans 132-149 (GEDDGDDEADDEDDDGGE). Residues 155-164 (AAPPPADEGR) are compositionally biased toward pro residues.

Belongs to the RbfA family. As to quaternary structure, monomer. Binds 30S ribosomal subunits, but not 50S ribosomal subunits or 70S ribosomes.

It is found in the cytoplasm. One of several proteins that assist in the late maturation steps of the functional core of the 30S ribosomal subunit. Associates with free 30S ribosomal subunits (but not with 30S subunits that are part of 70S ribosomes or polysomes). Required for efficient processing of 16S rRNA. May interact with the 5'-terminal helix region of 16S rRNA. In Rhodospirillum rubrum (strain ATCC 11170 / ATH 1.1.1 / DSM 467 / LMG 4362 / NCIMB 8255 / S1), this protein is Ribosome-binding factor A.